The sequence spans 411 residues: Peptidase T (411 aa).

His-79 lines the Zn(2+) pocket. Residue Asp-81 is part of the active site. Position 142 (Asp-142) interacts with Zn(2+). The active-site Proton acceptor is the Glu-176. Residues Glu-177, Asp-199, and His-381 each coordinate Zn(2+).

The protein belongs to the peptidase M20B family. Requires Zn(2+) as cofactor.

It localises to the cytoplasm. The enzyme catalyses Release of the N-terminal residue from a tripeptide.. Its function is as follows. Cleaves the N-terminal amino acid of tripeptides. This is Peptidase T from Exiguobacterium sibiricum (strain DSM 17290 / CCUG 55495 / CIP 109462 / JCM 13490 / 255-15).